The following is a 531-amino-acid chain: Membrane protein insertase YidC (531 aa).

4 consecutive transmembrane segments (helical) span residues 5-25 (ALIAVVLSILFFYGYTALFSP), 343-363 (GNYGIAIIIITVIIKVIFYPL), 415-435 (LPMLVQIPVFFALYKALMFSI), and 489-509 (PVVFTFMFLNFPSGLVLYWLV).

It belongs to the OXA1/ALB3/YidC family. Type 1 subfamily. As to quaternary structure, interacts with the Sec translocase complex via SecD. Specifically interacts with transmembrane segments of nascent integral membrane proteins during membrane integration.

The protein localises to the cell inner membrane. Its function is as follows. Required for the insertion and/or proper folding and/or complex formation of integral membrane proteins into the membrane. Involved in integration of membrane proteins that insert both dependently and independently of the Sec translocase complex, as well as at least some lipoproteins. Aids folding of multispanning membrane proteins. The sequence is that of Membrane protein insertase YidC from Geobacter sulfurreducens (strain ATCC 51573 / DSM 12127 / PCA).